Reading from the N-terminus, the 67-residue chain is Cell division protein ZapB (67 aa).

Residues 3–59 (LELLSKLETKIQAALETIELLKMELEEEKQTSSSLSEQNQQLQQELTSWNEKVTGLV) are a coiled coil.

This sequence belongs to the ZapB family. Homodimer. The ends of the coiled-coil dimer bind to each other, forming polymers. Interacts with FtsZ.

Its subcellular location is the cytoplasm. Its function is as follows. Non-essential, abundant cell division factor that is required for proper Z-ring formation. It is recruited early to the divisome by direct interaction with FtsZ, stimulating Z-ring assembly and thereby promoting cell division earlier in the cell cycle. Its recruitment to the Z-ring requires functional FtsA or ZipA. In Shewanella halifaxensis (strain HAW-EB4), this protein is Cell division protein ZapB.